The chain runs to 292 residues: Early E4 34 kDa protein (292 aa).

The protein belongs to the adenoviridae E4 30 to 34 kDa protein family. In terms of assembly, interacts with E1B-55k.

It localises to the host nucleus. The protein localises to the host cytoplasm. In terms of biological role, plays a major role to prevent cellular inhibition of viral genome replication by nuclear bodies. Assembles an SCF-like E3 ubiquitin ligase complex based on the cellular proteins ELOB, ELOC, CUL5 and RBX1, in cooperation with viral E1B-55K. This viral RING-type ligase ubiquitinates cellular substrates prior to proteasomal degradation: p53/TP53, LIG4, MRE11-RAD50-NBS1 (MRN) complex, ITGA3, DAXX and BLM. The sequence is that of Early E4 34 kDa protein from Human adenovirus D serotype 9 (HAdV-9).